The sequence spans 105 residues: Heat shock protein HspQ (105 aa).

It belongs to the HspQ family.

It localises to the cytoplasm. Involved in the degradation of certain denaturated proteins, including DnaA, during heat shock stress. The chain is Heat shock protein HspQ from Yersinia enterocolitica serotype O:8 / biotype 1B (strain NCTC 13174 / 8081).